The sequence spans 365 residues: Protein RecA (365 aa).

Residue 73 to 80 participates in ATP binding; that stretch reads GPESSGKT.

It belongs to the RecA family.

It localises to the cytoplasm. Can catalyze the hydrolysis of ATP in the presence of single-stranded DNA, the ATP-dependent uptake of single-stranded DNA by duplex DNA, and the ATP-dependent hybridization of homologous single-stranded DNAs. It interacts with LexA causing its activation and leading to its autocatalytic cleavage. This Prochlorococcus marinus (strain MIT 9215) protein is Protein RecA.